A 185-amino-acid polypeptide reads, in one-letter code: Ribosome-recycling factor (185 aa).

It belongs to the RRF family.

It is found in the cytoplasm. Functionally, responsible for the release of ribosomes from messenger RNA at the termination of protein biosynthesis. May increase the efficiency of translation by recycling ribosomes from one round of translation to another. In Frankia casuarinae (strain DSM 45818 / CECT 9043 / HFP020203 / CcI3), this protein is Ribosome-recycling factor.